The sequence spans 303 residues: tRNA dimethylallyltransferase 1 (303 aa).

9-16 is a binding site for ATP; that stretch reads GPTASGKT. 11–16 serves as a coordination point for substrate; sequence TASGKT. Interaction with substrate tRNA regions lie at residues 34-37, 158-162, and 239-244; these read DSAL, QRLIR, and RCVGYR.

The protein belongs to the IPP transferase family. Monomer. Mg(2+) serves as cofactor.

The catalysed reaction is adenosine(37) in tRNA + dimethylallyl diphosphate = N(6)-dimethylallyladenosine(37) in tRNA + diphosphate. Catalyzes the transfer of a dimethylallyl group onto the adenine at position 37 in tRNAs that read codons beginning with uridine, leading to the formation of N6-(dimethylallyl)adenosine (i(6)A). The sequence is that of tRNA dimethylallyltransferase 1 from Shewanella sediminis (strain HAW-EB3).